The following is a 487-amino-acid chain: b(0,+)-type amino acid transporter 1 (487 aa).

A disordered region spans residues M1–E20. Residues M1–G31 are Cytoplasmic-facing. The residue at position 18 (S18) is a Phosphoserine. A helical transmembrane segment spans residues L32–V55. L-arginine is bound at residue I43–G47. Residues L56–V62 are Extracellular-facing. The chain crosses the membrane as a helical span at residues G63 to A84. The Cytoplasmic portion of the chain corresponds to E85–Y110. Residues L111–C137 traverse the membrane as a helical segment. Topologically, residues A138–P147 are extracellular. Helical transmembrane passes span A148–S169 and V170–I193. The Extracellular segment spans residues S194–S217. Residues V218 to L238 form a helical membrane-spanning segment. An L-arginine-binding site is contributed by D233. The Cytoplasmic segment spans residues N239–N251. Residues L252–Y274 form a helical membrane-spanning segment. The Extracellular segment spans residues F275 to S302. The chain crosses the membrane as a helical span at residues W303–G325. The Cytoplasmic segment spans residues R326 to P351. Helical transmembrane passes span A352–D370 and I371–L391. Over G392–P410 the chain is Cytoplasmic. The chain crosses the membrane as a helical span at residues L411–S431. The Extracellular portion of the chain corresponds to E432–A434. Residues W435–F450 traverse the membrane as a helical segment. Residues Y451–E487 are Cytoplasmic-facing.

Belongs to the amino acid-polyamine-organocation (APC) superfamily. Disulfide-linked heterodimer composed of the catalytic light chain subunit SLC7A9 and the heavy chain subunit SLC3A1. The heterodimer is the minimal functional unit. Assembles in heterotetramers (dimers of heterodimers) and higher order oligomers; the oligomerization is mediated by SLC3A1 likely to prevent degradation and facilitate heteromer trafficking to the plasma membrane. Interacts with CAV1. Expressed in the brush border membrane in the kidney (at protein level).

Its subcellular location is the apical cell membrane. The catalysed reaction is L-leucine(out) + L-arginine(in) = L-leucine(in) + L-arginine(out). It carries out the reaction L-histidine(out) + L-arginine(in) = L-histidine(in) + L-arginine(out). The enzyme catalyses L-arginine(in) + L-phenylalanine(out) = L-arginine(out) + L-phenylalanine(in). It catalyses the reaction L-cysteine(out) + L-arginine(in) = L-cysteine(in) + L-arginine(out). The catalysed reaction is L-cystine(out) + L-arginine(in) = L-cystine(in) + L-arginine(out). It carries out the reaction L-lysine(out) + L-arginine(in) = L-lysine(in) + L-arginine(out). Associates with SLC3A1 to form a functional transporter complex that mediates the electrogenic exchange between cationic amino acids and neutral amino acids, with a stoichiometry of 1:1. Has system b(0,+)-like activity with high affinity for extracellular cationic amino acids and L-cystine and lower affinity for intracellular neutral amino acids. Substrate exchange is driven by high concentration of intracellular neutral amino acids and the intracellular reduction of L-cystine to L-cysteine. Required for reabsorption of L-cystine and dibasic amino acids across the brush border membrane in renal proximal tubules. This chain is b(0,+)-type amino acid transporter 1 (Slc7a9), found in Mus musculus (Mouse).